A 363-amino-acid chain; its full sequence is NADH-quinone oxidoreductase subunit H (363 aa).

10 consecutive transmembrane segments (helical) span residues 29–49, 62–82, 94–114, 127–147, 166–186, 202–222, 239–257, 264–286, 293–313, and 339–359; these read VLKI…YVVW, GPMY…KLLF, VIFV…WAVV, VGLL…ILAG, VVSY…AAGS, FFDW…VSGV, IVAG…LFFL, ILVS…QGWV, LIDW…LFFA, and FIPL…SGVI.

Belongs to the complex I subunit 1 family. In terms of assembly, NDH-1 is composed of 14 different subunits. Subunits NuoA, H, J, K, L, M, N constitute the membrane sector of the complex.

The protein localises to the cell inner membrane. It catalyses the reaction a quinone + NADH + 5 H(+)(in) = a quinol + NAD(+) + 4 H(+)(out). In terms of biological role, NDH-1 shuttles electrons from NADH, via FMN and iron-sulfur (Fe-S) centers, to quinones in the respiratory chain. The immediate electron acceptor for the enzyme in this species is believed to be ubiquinone. Couples the redox reaction to proton translocation (for every two electrons transferred, four hydrogen ions are translocated across the cytoplasmic membrane), and thus conserves the redox energy in a proton gradient. This subunit may bind ubiquinone. The chain is NADH-quinone oxidoreductase subunit H from Xylella fastidiosa (strain M12).